Consider the following 69-residue polypeptide: Small ribosomal subunit protein bS21 (69 aa).

Belongs to the bacterial ribosomal protein bS21 family.

The polypeptide is Small ribosomal subunit protein bS21 (Borrelia duttonii (strain Ly)).